We begin with the raw amino-acid sequence, 321 residues long: MTLNLAQRVLNQESLTKDEAISIFENAEIDTFDLLNEAYTVRKHYYGKKVKLNMILNAKSGICAEDCGYCGQSVKMKEKQRYALVEQDQIKEGAQVATENQIGTYCIVMSGRGPSNREVDHICETVEDIKKIHPQLKICACLGLTKEEQAKKLKAAGVDRYNHNLNTSERYHDEVVTTHTYEDRVNTVEMMKDNNISPCSGVICGMGESNEDIIDMAFALRAIDADSIPINFLHPIKGTKFGGLDLLSPMKCLRIIAMFRLINPTKEIRIAGGREVNLRSLQPLALKAANSIFVGDYLITGGQPNEEDYRMIEDLGFEIDS.

One can recognise a Radical SAM core domain in the interval 45 to 271 (YYGKKVKLNM…INPTKEIRIA (227 aa)). C63, C67, and C70 together coordinate [4Fe-4S] cluster. [2Fe-2S] cluster contacts are provided by C106, C139, C199, and R269.

This sequence belongs to the radical SAM superfamily. Biotin synthase family. As to quaternary structure, homodimer. Requires [4Fe-4S] cluster as cofactor. [2Fe-2S] cluster is required as a cofactor.

The enzyme catalyses (4R,5S)-dethiobiotin + (sulfur carrier)-SH + 2 reduced [2Fe-2S]-[ferredoxin] + 2 S-adenosyl-L-methionine = (sulfur carrier)-H + biotin + 2 5'-deoxyadenosine + 2 L-methionine + 2 oxidized [2Fe-2S]-[ferredoxin]. The protein operates within cofactor biosynthesis; biotin biosynthesis; biotin from 7,8-diaminononanoate: step 2/2. Catalyzes the conversion of dethiobiotin (DTB) to biotin by the insertion of a sulfur atom into dethiobiotin via a radical-based mechanism. The protein is Biotin synthase of Staphylococcus epidermidis (strain ATCC 35984 / DSM 28319 / BCRC 17069 / CCUG 31568 / BM 3577 / RP62A).